The sequence spans 282 residues: Putative 23S rRNA (guanine-N(1)-)-methyltransferase YxjB (282 aa).

Residues Cys-12, Cys-15, Cys-29, and His-34 each contribute to the Zn(2+) site. S-adenosyl-L-methionine is bound at residue 103–104 (EG).

It belongs to the methyltransferase superfamily. RlmA family.

The chain is Putative 23S rRNA (guanine-N(1)-)-methyltransferase YxjB (yxjB) from Bacillus subtilis (strain 168).